The primary structure comprises 218 residues: Glycerol-3-phosphate acyltransferase (218 aa).

The next 5 membrane-spanning stretches (helical) occupy residues 5–25 (ALGM…ILIC), 53–73 (LAAA…VWLA), 80–100 (PFYL…PVFF), 115–135 (IAAI…LTVL), and 138–158 (GYSS…VWWF).

It belongs to the PlsY family. In terms of assembly, probably interacts with PlsX.

Its subcellular location is the cell inner membrane. The enzyme catalyses an acyl phosphate + sn-glycerol 3-phosphate = a 1-acyl-sn-glycero-3-phosphate + phosphate. Its pathway is lipid metabolism; phospholipid metabolism. Catalyzes the transfer of an acyl group from acyl-phosphate (acyl-PO(4)) to glycerol-3-phosphate (G3P) to form lysophosphatidic acid (LPA). This enzyme utilizes acyl-phosphate as fatty acyl donor, but not acyl-CoA or acyl-ACP. This is Glycerol-3-phosphate acyltransferase from Proteus mirabilis (strain HI4320).